The primary structure comprises 301 residues: MATPTESEFAAPIPQTNPGSYEELHRKARDVFPTCFEGAKLMVNKGLSSHFQVSHTLSLSAMNTGYRFGATYVGTNQVGPAEAYPILLGDTDVNGNTTATILHQMGIYRTKLQGQIQQGKLAGAQATIERKGRLSTLGLTLANIDLVNEAGILVGQFLRRLTPRLDVGTEMVYQYGKNIPGGQISVLSYAARYTANHFIAAATLGASGVHLTYYHKQHDNLAFGVEFECNANVGEAVTTLAYQTELPEEGVTMRASFDTNWSVGGVFEKRLSQQLPFTLALSGTLNHVKAAGKFGIGLIIG.

The interval 1-20 (MATPTESEFAAPIPQTNPGS) is disordered.

Belongs to the Tom40 family. As to quaternary structure, forms part of the preprotein translocase complex of the outer mitochondrial membrane (TOM complex). Interacts with mitochondrial targeting sequences.

Its subcellular location is the mitochondrion outer membrane. Its function is as follows. Channel-forming protein essential for import of protein precursors into mitochondria. Specifically required for nnt-1 accumulation in the mitochondria and may be involved in the secretion of daf-28/insulin from the mitochondria. Required for embryonic and larval development. The protein is Mitochondrial import receptor subunit TOM40 homolog of Caenorhabditis briggsae.